The chain runs to 329 residues: Oxidoreductase sirO (329 aa).

An NADP(+)-binding site is contributed by Asp-54. The active-site Proton donor is the Tyr-59. Position 118 (His-118) interacts with substrate. NADP(+)-binding positions include 148 to 149 (SN), Gln-174, 203 to 213 (SPLCCGLLINA), and 288 to 296 (SSARQLEES).

Belongs to the aldo/keto reductase family. Aldo/keto reductase 2 subfamily.

Its pathway is mycotoxin biosynthesis. Oxidoreductase; part of the gene cluster that mediates the biosynthesis of sirodesmin PL, an epipolythiodioxopiperazine (ETP) characterized by a disulfide bridged cyclic dipeptide and that acts as a phytotoxin which is involved in the blackleg didease of canola. SirD catalyzes the O-prenylation of L-tyrosine (L-Tyr) in the presence of dimethylallyl diphosphate (DMAPP) to yield 4-O-dimethylallyl-L-Tyr, and therefore represents probably the first pathway-specific enzyme in the biosynthesis of sirodesmin PL. 4-O-dimethylallyl-L-Tyr, then undergoes condensation with L-Ser in a reaction catalyzed by the non-ribosomal peptide synthase sirP to form the diketopiperazine (DKP) backbone. Further bishydroxylation of the DKP performed by the cytochrome P450 monooxygenase sirC leads to the production of the intermediate phomamide. This step is essential to form the reactive thiol group required for toxicity of sirodesmin PL. The next steps of sirodesmin biosynthesis are not well understood yet, but some predictions could be made from intermediate compounds identification. Phomamide is converted into phomalizarine via oxidation, probably by sirT. Further oxidation, methylation (by sirM or sirN) and reduction steps convert phomalizarine to deacetyl sirodesmin. Finally, acetyltransferase sirH probably acetylates deacetyl sirodesmin to produce sirodesmin PL. The chain is Oxidoreductase sirO from Leptosphaeria maculans (Blackleg fungus).